Here is a 1578-residue protein sequence, read N- to C-terminus: BRD4-interacting chromatin-remodeling complex-associated protein (1578 aa).

Disordered stretches follow at residues 80 to 101, 631 to 673, and 725 to 951; these read DILG…DQPC, PAVT…PSLA, and IVSA…PPPR. Residues 86–96 show a composition bias toward gly residues; sequence AAGGGGGGGGA. Composition is skewed to low complexity over residues 631–662 and 764–782; these read PAVT…TQPQ and IPAA…PSLP. Pro residues-rich tracts occupy residues 793–816, 824–841, and 865–888; these read MPSP…PPSQ, PSEP…PPTL, and PGPP…PASH. Residues 889–906 are compositionally biased toward low complexity; the sequence is LPPASTPSAVASSSEPSA. Phosphoserine is present on serine 929. Threonine 931 carries the phosphothreonine modification. Residues 942-951 are compositionally biased toward pro residues; sequence PTAPPPPPPR. Lysine 1067 is subject to N6-acetyllysine. The interval 1206–1316 is disordered; the sequence is EKPDEYVSSS…NRPPIKTYEA (111 aa). 2 stretches are compositionally biased toward low complexity: residues 1233–1247 and 1275–1294; these read SHGQ…GTSA and ASSS…AASS. Lysine 1327 is covalently cross-linked (Glycyl lysine isopeptide (Lys-Gly) (interchain with G-Cter in SUMO2)). Disordered stretches follow at residues 1342–1435 and 1457–1578; these read DPVH…PTKV and VLKG…TLNR. Residues 1346 to 1370 show a composition bias toward pro residues; sequence QPLPAPTPAKGAEPPPHPAPPPLPP. Position 1427 is a phosphoserine (serine 1427). Over residues 1502-1532 the composition is skewed to polar residues; the sequence is ASFSSDSPQDDTLTEHLQSAIDSILNLQQAP. Residues 1538–1553 are compositionally biased toward pro residues; it reads GPYPHTGPTPGTPTSP.

In terms of assembly, component of the multiprotein chromatin-remodeling complexes SWI/SNF: SWI/SNF-A (BAF), SWI/SNF-B (PBAF) and related complexes. The canonical complex contains a catalytic subunit (either SMARCA4/BRG1/BAF190A or SMARCA2/BRM/BAF190B) and at least SMARCE1, ACTL6A/BAF53, SMARCC1/BAF155, SMARCC2/BAF170, and SMARCB1/SNF5/BAF47. Other subunits specific to each of the complexes may also be present permitting several possible combinations developmentally and tissue specific. Component of the SWI/SNF (GBAF) subcomplex, which includes at least BICRA or BICRAL (mutually exclusive), BRD9, SS18, the core BAF subunits, SMARCA2/BRM, SMARCA4/BRG1/BAF190A, ACTL6A/BAF53, SMARCC1/BAF155, and SMARCD1/BAF60A. Interacts with BRD4; the interaction bridges BRD4 to the GBAF complex.

It localises to the nucleus. Its function is as follows. Component of SWI/SNF chromatin remodeling subcomplex GBAF that carries out key enzymatic activities, changing chromatin structure by altering DNA-histone contacts within a nucleosome in an ATP-dependent manner. May play a role in BRD4-mediated gene transcription. This is BRD4-interacting chromatin-remodeling complex-associated protein from Mus musculus (Mouse).